The primary structure comprises 520 residues: TnpB-like protein L79 (520 aa).

Residues 21 to 47 (GSKTKKKVFVKKKPPDKKPLKKPVKKT) are compositionally biased toward basic residues. The tract at residues 21 to 52 (GSKTKKKVFVKKKPPDKKPLKKPVKKTVKTDK) is disordered. The Zn(2+) site is built by Cys-474, Cys-477, Cys-491, and Cys-494.

It in the central section; belongs to the transposase 2 family. The protein in the C-terminal section; belongs to the transposase 35 family.

This Acanthamoeba polyphaga mimivirus (APMV) protein is TnpB-like protein L79.